A 296-amino-acid chain; its full sequence is Small ribosomal subunit biogenesis GTPase RsgA (296 aa).

The CP-type G domain maps to 65–226; that stretch reads TNELIRPPIS…VADTPGFSSL (162 aa). GTP contacts are provided by residues 114-117 and 169-177; these read TKMD and GQSGVGKSS. Residues cysteine 250, cysteine 255, histidine 257, and cysteine 263 each coordinate Zn(2+).

It belongs to the TRAFAC class YlqF/YawG GTPase family. RsgA subfamily. As to quaternary structure, monomer. Associates with 30S ribosomal subunit, binds 16S rRNA. It depends on Zn(2+) as a cofactor.

The protein localises to the cytoplasm. One of several proteins that assist in the late maturation steps of the functional core of the 30S ribosomal subunit. Helps release RbfA from mature subunits. May play a role in the assembly of ribosomal proteins into the subunit. Circularly permuted GTPase that catalyzes slow GTP hydrolysis, GTPase activity is stimulated by the 30S ribosomal subunit. This Bacillus velezensis (strain DSM 23117 / BGSC 10A6 / LMG 26770 / FZB42) (Bacillus amyloliquefaciens subsp. plantarum) protein is Small ribosomal subunit biogenesis GTPase RsgA.